An 88-amino-acid chain; its full sequence is Small ribosomal subunit protein bS16 (88 aa).

Belongs to the bacterial ribosomal protein bS16 family.

The sequence is that of Small ribosomal subunit protein bS16 from Geotalea daltonii (strain DSM 22248 / JCM 15807 / FRC-32) (Geobacter daltonii).